Reading from the N-terminus, the 478-residue chain is Secretogranin-3 (478 aa).

The N-terminal stretch at 1–21 (MASKRLGFVVVLALVCQHINA) is a signal peptide. Disordered stretches follow at residues 22-126 (FPTP…NGMD) and 208-287 (IGDR…EDGL). Basic and acidic residues predominate over residues 28 to 42 (PDDKYNRELTEEKPL). Residues 63 to 74 (AEEETNSEDDDI) show a composition bias toward acidic residues. Residues 97 to 120 (ANERLGADDTDSTKNRRLADDYDS) are compositionally biased toward basic and acidic residues. Residues 235 to 259 (DEEDEVENEGGDDANGDEPQEEESR) show a composition bias toward acidic residues.

It is found in the cytoplasmic vesicle. The protein localises to the secretory vesicle lumen. The protein resides in the secretory vesicle membrane. Its subcellular location is the secreted. The protein is Secretogranin-3 (scg3) of Danio rerio (Zebrafish).